The following is a 259-amino-acid chain: Dolichol-phosphate mannosyltransferase subunit 1 (259 aa).

Position 2 is an N-acetylalanine (alanine 2). Serine 3 is subject to Phosphoserine. 11 residues coordinate GDP-alpha-D-mannose: proline 31, tyrosine 33, glutamate 35, isoleucine 62, aspartate 64, aspartate 117, alanine 118, aspartate 119, arginine 146, arginine 233, and lysine 239. Aspartate 119 serves as a coordination point for Mg(2+). A Mn(2+)-binding site is contributed by aspartate 119.

This sequence belongs to the glycosyltransferase 2 family. Component of the dolichol-phosphate mannose (DPM) synthase complex composed of DPM1, DPM2 and DPM3; within the complex, directly interacts with DPM3. This interaction may stabilize DPM1. The cofactor is Mg(2+). Mn(2+) serves as cofactor. It depends on Ca(2+) as a cofactor.

It localises to the endoplasmic reticulum. The catalysed reaction is a di-trans,poly-cis-dolichyl phosphate + GDP-alpha-D-mannose = a di-trans,poly-cis-dolichyl beta-D-mannosyl phosphate + GDP. It participates in protein modification; protein glycosylation. Transfers mannose from GDP-mannose to dolichol monophosphate to form dolichol phosphate mannose (Dol-P-Man) which is the mannosyl donor in pathways leading to N-glycosylation, glycosyl phosphatidylinositol membrane anchoring, and O-mannosylation of proteins; catalytic subunit of the dolichol-phosphate mannose (DPM) synthase complex. In Sus scrofa (Pig), this protein is Dolichol-phosphate mannosyltransferase subunit 1 (DPM1).